We begin with the raw amino-acid sequence, 323 residues long: Zinc finger protein 784 (323 aa).

The segment at 1 to 26 (MAAARPEAQSRSSPTPESRSQEPLDL) is disordered. The span at 9-18 (QSRSSPTPES) shows a compositional bias: polar residues. At S13 the chain carries Phosphoserine. C2H2-type zinc fingers lie at residues 65–87 (FHCALCPAAFRLVSELLFHEHGH), 101–123 (SRCHVCGHSCPGPASLRAHYSLH), 129–151 (YRCALCPRAFKALAPLLRHQHRH), 196–218 (FACRFCAKPFRRSSDMRDHERVH), 224–246 (YHCGICGKGFTQSSVLSGHARIH), and 252–274 (FRCTLCDRTFNNSSNFRKHQRTH). Positions 269-323 (KHQRTHFHGPGPGLGDSGGQLGSSAAEGSGSGCGVGDPAEEGRGETAKVKVEADQ) are disordered. The segment covering 278–289 (PGPGLGDSGGQL) has biased composition (gly residues). Residues 308–323 (EEGRGETAKVKVEADQ) show a composition bias toward basic and acidic residues. K318 participates in a covalent cross-link: Glycyl lysine isopeptide (Lys-Gly) (interchain with G-Cter in SUMO2).

Belongs to the krueppel C2H2-type zinc-finger protein family.

It localises to the nucleus. Its function is as follows. May be involved in transcriptional regulation. In Homo sapiens (Human), this protein is Zinc finger protein 784 (ZNF784).